Here is a 175-residue protein sequence, read N- to C-terminus: MAEVHVIGQIIGATGFSESSLFCKWGIHTGAAWKLLSGVREGQTQVDTPQIGDMAYWSHPIDLHFATKGLQGWPRLHLQVWSQDSFGRCQLAGYGFCHVPSSPGTHQLDCPTWRPLGSWREQLARAFVGGGPQLLHADTIYSGADRYRLHTAAGGTVHLGIGLLLRHFDRYGVEC.

The 117-residue stretch at 2–118 (AEVHVIGQII…DCPTWRPLGS (117 aa)) folds into the C2 B9-type domain.

This sequence belongs to the B9D family. Part of the tectonic-like complex (also named B9 complex). Interacts with TUBG1. In terms of tissue distribution, highest expression in thymus and skeletal muscle. Also expressed in spleen, kidney, lung, heart, microglia and liver. Detected in brain (at protein level).

It is found in the cytoplasm. It localises to the cytoskeleton. The protein localises to the cilium basal body. The protein resides in the cilium axoneme. Its subcellular location is the nucleus. Component of the tectonic-like complex, a complex localized at the transition zone of primary cilia and acting as a barrier that prevents diffusion of transmembrane proteins between the cilia and plasma membranes. This chain is B9 domain-containing protein 2 (B9d2), found in Mus musculus (Mouse).